The chain runs to 255 residues: 5-oxoprolinase subunit A (255 aa).

This sequence belongs to the LamB/PxpA family. As to quaternary structure, forms a complex composed of PxpA, PxpB and PxpC.

The enzyme catalyses 5-oxo-L-proline + ATP + 2 H2O = L-glutamate + ADP + phosphate + H(+). Its function is as follows. Catalyzes the cleavage of 5-oxoproline to form L-glutamate coupled to the hydrolysis of ATP to ADP and inorganic phosphate. This Campylobacter jejuni subsp. jejuni serotype O:2 (strain ATCC 700819 / NCTC 11168) protein is 5-oxoprolinase subunit A.